The following is a 105-amino-acid chain: uncharacterized protein (105 aa).

It is found in the plastid. This is an uncharacterized protein from Euglena longa (Euglenophycean alga).